A 463-amino-acid polypeptide reads, in one-letter code: Competence protein ComFA (463 aa).

Zn(2+) contacts are provided by C60, C63, C84, and C87. The Helicase ATP-binding domain occupies 133-285; sequence IEAISKKEEL…LNGQLHSVRI (153 aa). 146 to 153 serves as a coordination point for ATP; the sequence is AVCGAGKT. The DEAD box signature appears at 233 to 236; that stretch reads DEVD. The Helicase C-terminal domain maps to 317–463; it reads AVKRWIEFHV…ELAAKVECTD (147 aa).

The protein belongs to the DEAD box helicase family. Monomer and dimer in solution. Interacts with DprA and ComFC; ComFA-ComFC form rings about 150 Angstroms in diameter with apparent 6-fold symmetry. The cofactor is Zn(2+).

The protein resides in the cytoplasm. Involved in transformation (genetic competence for DNA uptake). Required for DNA uptake but not for DNA binding to cells. DNA uptake is energy dependent, this protein may provide the driving force for DNA uptake. Does not have helicase activity, translocates on single-stranded (ss)DNA in a 5'-3' direction in an ATP-dependent manner, but does not unwind double-stranded (ds)DNA. ATP hydrolysis causes the release of ssDNA from ComFA. A ssDNA-stimulated ATPase; dsDNA does not stimulate ATPase. ATP hydrolysis causes the release of ssDNA from ComFA. Binds ssDNA but only very poorly to dsDNA in the absence of ATP. Binding to ssDNA does not require free DNA ends. The polypeptide is Competence protein ComFA (Bacillus subtilis (strain 168)).